The following is a 262-amino-acid chain: Acyl-[acyl-carrier-protein]--UDP-N-acetylglucosamine O-acyltransferase (262 aa).

It belongs to the transferase hexapeptide repeat family. LpxA subfamily. Homotrimer.

It localises to the cytoplasm. It carries out the reaction a (3R)-hydroxyacyl-[ACP] + UDP-N-acetyl-alpha-D-glucosamine = a UDP-3-O-[(3R)-3-hydroxyacyl]-N-acetyl-alpha-D-glucosamine + holo-[ACP]. It functions in the pathway glycolipid biosynthesis; lipid IV(A) biosynthesis; lipid IV(A) from (3R)-3-hydroxytetradecanoyl-[acyl-carrier-protein] and UDP-N-acetyl-alpha-D-glucosamine: step 1/6. Its function is as follows. Involved in the biosynthesis of lipid A, a phosphorylated glycolipid that anchors the lipopolysaccharide to the outer membrane of the cell. This chain is Acyl-[acyl-carrier-protein]--UDP-N-acetylglucosamine O-acyltransferase, found in Aliivibrio salmonicida (strain LFI1238) (Vibrio salmonicida (strain LFI1238)).